The chain runs to 78 residues: Major outer membrane lipoprotein Lpp 1 (78 aa).

A signal peptide spans 1 to 20 (MNRTKLVLGAVILGSTLLAG). A lipid anchor (N-palmitoyl cysteine) is attached at Cys-21. The S-diacylglycerol cysteine moiety is linked to residue Cys-21. 2 repeats span residues 24 to 34 (NAKIDQLSSDV) and 38 to 48 (NAKVDQLSNDV). Residues 27–75 (IDQLSSDVQTLNAKVDQLSNDVNAMRSDVQAAKDDAARANQRLDNQATK) adopt a coiled-coil conformation. The disordered stretch occupies residues 56–78 (QAAKDDAARANQRLDNQATKYRK). Polar residues predominate over residues 68-78 (RLDNQATKYRK). Lys-78 is modified (N6-murein peptidoglycan lysine).

This sequence belongs to the Lpp family. Homotrimer.

It localises to the cell outer membrane. The protein localises to the secreted. It is found in the cell wall. In terms of biological role, a highly abundant outer membrane lipoprotein that controls the distance between the inner and outer membranes. The only protein known to be covalently linked to the peptidoglycan network (PGN). Also non-covalently binds the PGN. The link between the cell outer membrane and PGN contributes to maintenance of the structural and functional integrity of the cell envelope, and maintains the correct distance between the PGN and the outer membrane. The sequence is that of Major outer membrane lipoprotein Lpp 1 from Salmonella paratyphi A (strain ATCC 9150 / SARB42).